The following is a 324-amino-acid chain: Glutaminase 2 (324 aa).

Substrate contacts are provided by serine 75, asparagine 127, glutamate 171, asparagine 178, tyrosine 202, tyrosine 254, and valine 272.

Belongs to the glutaminase family. Homotetramer.

It carries out the reaction L-glutamine + H2O = L-glutamate + NH4(+). This chain is Glutaminase 2, found in Halalkalibacterium halodurans (strain ATCC BAA-125 / DSM 18197 / FERM 7344 / JCM 9153 / C-125) (Bacillus halodurans).